The following is a 339-amino-acid chain: DNA-directed RNA polymerase subunit alpha (339 aa).

An alpha N-terminal domain (alpha-NTD) region spans residues 1–233 (MVREEVAGST…DLFLPFLHAE (233 aa)). The segment at 264–339 (KKGIPLNCIF…IDLLKNKLSF (76 aa)) is alpha C-terminal domain (alpha-CTD).

It belongs to the RNA polymerase alpha chain family. In terms of assembly, in plastids the minimal PEP RNA polymerase catalytic core is composed of four subunits: alpha, beta, beta', and beta''. When a (nuclear-encoded) sigma factor is associated with the core the holoenzyme is formed, which can initiate transcription.

The protein resides in the plastid. The protein localises to the chloroplast. The catalysed reaction is RNA(n) + a ribonucleoside 5'-triphosphate = RNA(n+1) + diphosphate. DNA-dependent RNA polymerase catalyzes the transcription of DNA into RNA using the four ribonucleoside triphosphates as substrates. This chain is DNA-directed RNA polymerase subunit alpha, found in Secale strictum (Mountain rye).